A 289-amino-acid polypeptide reads, in one-letter code: Glycerol facilitator-aquaporin gla (289 aa).

2 consecutive transmembrane segments (helical) span residues 10–30 (ITEFVGTALLIIMGNGAVANV) and 41–61 (SWMIIGWGYGLGVMLPAVAFG). Positions 68 to 70 (NPA) match the NPA 1 motif. A run of 3 helical transmembrane segments spans residues 87–107 (AQYIIAQVLGAMFGQLLIVMV), 151–171 (FVGSFVLFFGAVAATNIFFGS), and 209–229 (MVAHLFLGFLVMGLVVALGGP). The NPA 2 motif lies at 235 to 237 (NPA). The helical transmembrane segment at 264–284 (WYAWVPVLAPILASLAAVALF) threads the bilayer.

Belongs to the MIP/aquaporin (TC 1.A.8) family.

Its subcellular location is the cell membrane. Functionally, mixed channel protein that transports both water and glycerol. This Lactococcus lactis subsp. lactis (strain IL1403) (Streptococcus lactis) protein is Glycerol facilitator-aquaporin gla (gla).